Reading from the N-terminus, the 195-residue chain is MSLKIGIAGPVGSGKTSLIESLTNLLKDKYSLGIVTNDIYTTEDANYLKKTLDLDNERIIGVETGGCPHTAIRDDISMNQKAVVELEEKFNPDIVFVESGGDNLSATFSYELIDYYIYVIDVAQGADIPRKKGAGLLFSDLLIVNKTDLAPYVEIDLVDMQIDVKENRKNKPYVFISKKEPQTLNQVVSWIEALI.

Position 9–16 (9–16) interacts with GTP; that stretch reads GPVGSGKT.

This sequence belongs to the SIMIBI class G3E GTPase family. UreG subfamily. In terms of assembly, homodimer. UreD, UreF and UreG form a complex that acts as a GTP-hydrolysis-dependent molecular chaperone, activating the urease apoprotein by helping to assemble the nickel containing metallocenter of UreC. The UreE protein probably delivers the nickel.

The protein localises to the cytoplasm. In terms of biological role, facilitates the functional incorporation of the urease nickel metallocenter. This process requires GTP hydrolysis, probably effectuated by UreG. This Aliarcobacter butzleri (strain RM4018) (Arcobacter butzleri) protein is Urease accessory protein UreG.